The sequence spans 377 residues: tRNA-specific 2-thiouridylase MnmA (377 aa).

Residues 17 to 24 (GMSGGVDS) and methionine 43 each bind ATP. An interaction with target base in tRNA region spans residues 103–105 (NPD). Residue cysteine 108 is the Nucleophile of the active site. The cysteines at positions 108 and 204 are disulfide-linked. Residue glycine 132 coordinates ATP. Residues 154 to 156 (KDQ) form an interaction with tRNA region. Residue cysteine 204 is the Cysteine persulfide intermediate of the active site. The tract at residues 316–317 (RY) is interaction with tRNA.

The protein belongs to the MnmA/TRMU family.

Its subcellular location is the cytoplasm. It catalyses the reaction S-sulfanyl-L-cysteinyl-[protein] + uridine(34) in tRNA + AH2 + ATP = 2-thiouridine(34) in tRNA + L-cysteinyl-[protein] + A + AMP + diphosphate + H(+). Functionally, catalyzes the 2-thiolation of uridine at the wobble position (U34) of tRNA, leading to the formation of s(2)U34. The protein is tRNA-specific 2-thiouridylase MnmA of Pseudomonas fluorescens (strain ATCC BAA-477 / NRRL B-23932 / Pf-5).